Consider the following 434-residue polypeptide: Trigger factor (434 aa).

The 86-residue stretch at 160–245 folds into the PPIase FKBP-type domain; sequence GDKVKMNFVG…LTEVQAANLP (86 aa).

It belongs to the FKBP-type PPIase family. Tig subfamily.

Its subcellular location is the cytoplasm. It carries out the reaction [protein]-peptidylproline (omega=180) = [protein]-peptidylproline (omega=0). Involved in protein export. Acts as a chaperone by maintaining the newly synthesized protein in an open conformation. Functions as a peptidyl-prolyl cis-trans isomerase. In Shewanella baltica (strain OS185), this protein is Trigger factor.